Consider the following 208-residue polypeptide: Claudin-like protein ZF-A89 (208 aa).

The next 4 membrane-spanning stretches (helical) occupy residues 8 to 28, 82 to 102, 117 to 137, and 160 to 180; these read LLATVLAIIGWLGEIVICALP, ALVVISIIVTFMGVFLTIAGG, VVVAAGVFFLVGGILCLIPVC, and LGASLFIGWCASGLLLLGGAL.

Belongs to the claudin family.

It is found in the cell membrane. The protein resides in the cell junction. Its subcellular location is the tight junction. In terms of biological role, component of tight junction (TJ) strands. The protein is Claudin-like protein ZF-A89 (cldnd) of Danio rerio (Zebrafish).